We begin with the raw amino-acid sequence, 231 residues long: MGGAVTKSETLQKEWVPETKLEAKIIEAVQRRASRGTTMKSFNSIVLKFPKIDDGLRNCKAIFQEFDEDSNGSIDHTELKNCIRKLEISFDEEEINDLFKACDINEDMGITFTEFIVLLCLVYLLKDDSSTLQKKWTMGMPKLEPTFETLVDTFVFLDENKDGYVSREEMVRAIDESGERSSGRIAMKRFEEMDWDKNGMVNFKEFLFAFTQWVGIDENEEEEEEDNNEKA.

EF-hand domains follow at residues 54–89, 90–125, 145–180, and 181–216; these read DGLRNCKAIFQEFDEDSNGSIDHTELKNCIRKLEIS, FDEEEINDLFKACDINEDMGITFTEFIVLLCLVYLL, PTFETLVDTFVFLDENKDGYVSREEMVRAIDESGER, and SSGRIAMKRFEEMDWDKNGMVNFKEFLFAFTQWVGI. Ca(2+) contacts are provided by Asp-67, Asp-69, Asn-71, Ser-73, and Glu-78. Positions 158, 160, 162, 164, 169, 194, 196, 198, 200, and 205 each coordinate Ca(2+).

In terms of biological role, potential calcium sensor. The sequence is that of Probable calcium-binding protein CML21 (CML21) from Arabidopsis thaliana (Mouse-ear cress).